The primary structure comprises 223 residues: MKRN2 opposite strand protein (223 aa).

The polypeptide is MKRN2 opposite strand protein (MKRN2OS) (Homo sapiens (Human)).